The chain runs to 567 residues: MLILSLFILIIYSSIINNIDTINLLSSSNKIGWKLQNYNIIRIGIIIILYSLYIFKDISLSYIFNNYNNNNDLNIYIFNDLYKLNIFNIYIIFLLLIVIISLLSINTTYLTKIQIKNNNNNISIGKSDNYIELNIYYISIIIFNIIGLILLLTSNNLISIFISIELQSYSLYILTGIIPKSQKSGHNSLFYYLIGGIGSIIILYGISLLYYITSNIFINNINLIYSLDIYNINNNILIGWLFIIIGLLIKIGAAPMYNWSILLYSNSNTIITSYISLIPKISILSYILLIILNLYNLNNLNNLFNNNNNNNLIYILSIIIILSLIIGSIGGLTQIKIKNILAYSGLLNIGYFLLIILSLINNNNINSILAYIIYITQYCFNHISIFILLIIAIIYNNNYNNFITNKNLIYIYELNYIKNNRYLIFCLIIIIGSFIGIPPLFGFYGKYYLLISSINSNYLFLSLLLIISSIISSIYYLYFLNITLFDNNNNKNNNNNNNNESLLIPSFNIINDIKNNTSLSLSNKLKNNQVGNYITYILSSYILIILFNFIQWKNILKGTYLISILLF.

14 helical membrane-spanning segments follow: residues 2-22, 43-63, 85-105, 133-153, 158-178, 189-209, 236-256, 274-294, 312-332, 340-360, 372-392, 423-443, 459-479, and 530-550; these read LILS…IDTI, IGII…LSYI, NIFN…LLSI, LNIY…LLLT, ISIF…TGII, LFYY…ISLL, ILIG…AAPM, YISL…ILNL, LIYI…IGGL, ILAY…LSLI, IIYI…LIIA, LIFC…LFGF, LFLS…YLYF, and VGNY…FNFI.

This sequence belongs to the complex I subunit 2 family.

It is found in the mitochondrion inner membrane. It catalyses the reaction a ubiquinone + NADH + 5 H(+)(in) = a ubiquinol + NAD(+) + 4 H(+)(out). Core subunit of the mitochondrial membrane respiratory chain NADH dehydrogenase (Complex I) that is believed to belong to the minimal assembly required for catalysis. Complex I functions in the transfer of electrons from NADH to the respiratory chain. The immediate electron acceptor for the enzyme is believed to be ubiquinone. The polypeptide is NADH-ubiquinone oxidoreductase chain 2 (ND2) (Wickerhamomyces canadensis (Yeast)).